The following is a 347-amino-acid chain: NADH-quinone oxidoreductase subunit H (347 aa).

Helical transmembrane passes span Ile-14–Leu-34, Ala-82–Ile-102, Val-115–Gly-135, Ile-161–Val-181, Leu-198–Leu-218, Ala-258–Leu-278, Trp-285–Ile-305, and Leu-321–Leu-341.

The protein belongs to the complex I subunit 1 family. NDH-1 is composed of 14 different subunits. Subunits NuoA, H, J, K, L, M, N constitute the membrane sector of the complex.

It is found in the cell inner membrane. The catalysed reaction is a quinone + NADH + 5 H(+)(in) = a quinol + NAD(+) + 4 H(+)(out). Functionally, NDH-1 shuttles electrons from NADH, via FMN and iron-sulfur (Fe-S) centers, to quinones in the respiratory chain. The immediate electron acceptor for the enzyme in this species is believed to be ubiquinone. Couples the redox reaction to proton translocation (for every two electrons transferred, four hydrogen ions are translocated across the cytoplasmic membrane), and thus conserves the redox energy in a proton gradient. This subunit may bind ubiquinone. This is NADH-quinone oxidoreductase subunit H from Allorhizobium ampelinum (strain ATCC BAA-846 / DSM 112012 / S4) (Agrobacterium vitis (strain S4)).